A 57-amino-acid polypeptide reads, in one-letter code: MTEIKANSTVMIHVLADETLSSIKREYVEVDRKTEIGEKIIIVDKNDPDDEYENGAI.

This is an uncharacterized protein from Bacillus subtilis (strain 168).